The following is a 608-amino-acid chain: Protein trichome birefringence (608 aa).

A helical; Signal-anchor for type II membrane protein transmembrane segment spans residues 38-58 (TFAYAFVITFVSFTLFFAFSP). 2 stretches are compositionally biased toward polar residues: residues 101-137 (STKPTNRSSDATDSLSVNATSPPLNSNSKNGTLQTPA) and 145-203 (AKNT…TSPA). Residues 101–236 (STKPTNRSSD…TPKKQTKTVD (136 aa)) are disordered. Low complexity predominate over residues 215–227 (TNSSSNSSTASST). Residues 328–330 (GDS) carry the GDS motif motif. A DCXHWCLPGXXDXWN motif motif is present at residues 573-587 (DCSHWCLPGVPDSWN).

The protein belongs to the PC-esterase family. TBL subfamily. Expressed in leaf vasculature, growing part of the root, expanding inflorescence stems and trichomes.

Its subcellular location is the membrane. In terms of biological role, required during cellulose deposition. May act as a bridging protein that binds pectin and other cell wall polysaccharides. Probably involved in maintaining esterification of pectins. May be involved in the specific O-acetylation of cell wall polymers. The protein is Protein trichome birefringence (TBR) of Arabidopsis thaliana (Mouse-ear cress).